The chain runs to 183 residues: NADH-quinone oxidoreductase subunit A (183 aa).

A run of 3 helical transmembrane segments spans residues 11–31 (IIAFVIGVTFLCVFMLTVPLL), 63–83 (FYLVAIFFVVFDLEALYLYAW), and 98–118 (MVIFVVDLLIALIYVFATGAL). Residues 160–183 (GHIPAQSSGRMKSKTSTAPSSKQE) are disordered. A compositionally biased stretch (polar residues) spans 164–183 (AQSSGRMKSKTSTAPSSKQE).

It belongs to the complex I subunit 3 family. As to quaternary structure, NDH-1 is composed of 14 different subunits. Subunits NuoA, H, J, K, L, M, N constitute the membrane sector of the complex.

The protein resides in the cell inner membrane. The enzyme catalyses a quinone + NADH + 5 H(+)(in) = a quinol + NAD(+) + 4 H(+)(out). Functionally, NDH-1 shuttles electrons from NADH, via FMN and iron-sulfur (Fe-S) centers, to quinones in the respiratory chain. The immediate electron acceptor for the enzyme in this species is believed to be ubiquinone. Couples the redox reaction to proton translocation (for every two electrons transferred, four hydrogen ions are translocated across the cytoplasmic membrane), and thus conserves the redox energy in a proton gradient. This Acinetobacter baylyi (strain ATCC 33305 / BD413 / ADP1) protein is NADH-quinone oxidoreductase subunit A.